Reading from the N-terminus, the 464-residue chain is Alpha-amylase (464 aa).

Residues 1-21 (MKNTAGILAIAGMLIAPLAHA) form the signal peptide. Positions 107 and 213 each coordinate substrate. Residue D215 is the Nucleophile of the active site. Residue 218 to 219 (KH) coordinates substrate. The Proton donor role is filled by E242. Substrate is bound by residues G247 and H313.

The protein belongs to the glycosyl hydrolase 13 family.

Its subcellular location is the secreted. It carries out the reaction Endohydrolysis of (1-&gt;4)-alpha-D-glucosidic linkages in polysaccharides containing three or more (1-&gt;4)-alpha-linked D-glucose units.. The chain is Alpha-amylase from Aeromonas hydrophila.